Consider the following 304-residue polypeptide: Acetylglutamate kinase (304 aa).

Substrate-binding positions include 77-78 (GG), Arg-99, and Asn-193.

It belongs to the acetylglutamate kinase family. ArgB subfamily.

The protein resides in the cytoplasm. It carries out the reaction N-acetyl-L-glutamate + ATP = N-acetyl-L-glutamyl 5-phosphate + ADP. It participates in amino-acid biosynthesis; L-arginine biosynthesis; N(2)-acetyl-L-ornithine from L-glutamate: step 2/4. In terms of biological role, catalyzes the ATP-dependent phosphorylation of N-acetyl-L-glutamate. The polypeptide is Acetylglutamate kinase (Chlorobium limicola (strain DSM 245 / NBRC 103803 / 6330)).